A 260-amino-acid polypeptide reads, in one-letter code: MNQQLVPAIKVKDLSFYYNTSKAIEGISMDIYRNKVTAIIGPSGCGKSTFIKTLNRISELEGPVKVEGVVDFFGQNIYDPRININRLRRQIGMVFQRPNPFPMSIYENVAYGVRISAKLPQADLDEIVESALKGAALWQEVKDKLNKSALGLSGGQQQRLCIARALAIKPKVLLMDEPCSALDPIATMKVEELIHSLRSELTIAIVTHNMQQATRVSDFTAFFSTDESRIGQMVEFGVTTQIFSNPLDSRTRDYVSGRFG.

One can recognise an ABC transporter domain in the interval 9 to 255 (IKVKDLSFYY…PLDSRTRDYV (247 aa)). Residue 41-48 (GPSGCGKS) coordinates ATP.

This sequence belongs to the ABC transporter superfamily. Phosphate importer (TC 3.A.1.7) family. In terms of assembly, the complex is composed of two ATP-binding proteins (PstB), two transmembrane proteins (PstC and PstA) and a solute-binding protein (PstS).

The protein resides in the cell inner membrane. The enzyme catalyses phosphate(out) + ATP + H2O = ADP + 2 phosphate(in) + H(+). Part of the ABC transporter complex PstSACB involved in phosphate import. Responsible for energy coupling to the transport system. This is Phosphate import ATP-binding protein PstB 2 from Nostoc sp. (strain PCC 7120 / SAG 25.82 / UTEX 2576).